Reading from the N-terminus, the 214-residue chain is Orotate phosphoribosyltransferase (214 aa).

Lys-26 contributes to the 5-phospho-alpha-D-ribose 1-diphosphate binding site. 34–35 is an orotate binding site; that stretch reads FF. Residues 72–73, Arg-99, Lys-100, Lys-103, His-105, and 124–132 each bind 5-phospho-alpha-D-ribose 1-diphosphate; these read YK and DDVITAGTA. Positions 128 and 157 each coordinate orotate.

Belongs to the purine/pyrimidine phosphoribosyltransferase family. PyrE subfamily. Homodimer. Mg(2+) serves as cofactor.

It catalyses the reaction orotidine 5'-phosphate + diphosphate = orotate + 5-phospho-alpha-D-ribose 1-diphosphate. Its pathway is pyrimidine metabolism; UMP biosynthesis via de novo pathway; UMP from orotate: step 1/2. Its function is as follows. Catalyzes the transfer of a ribosyl phosphate group from 5-phosphoribose 1-diphosphate to orotate, leading to the formation of orotidine monophosphate (OMP). The chain is Orotate phosphoribosyltransferase from Pseudomonas fluorescens (strain SBW25).